A 290-amino-acid chain; its full sequence is 4-diphosphocytidyl-2-C-methyl-D-erythritol kinase (290 aa).

The active site involves lysine 14. 103–113 is a binding site for ATP; the sequence is PMGGGLGGGSS. Residue aspartate 145 is part of the active site.

This sequence belongs to the GHMP kinase family. IspE subfamily. In terms of assembly, homodimer.

The enzyme catalyses 4-CDP-2-C-methyl-D-erythritol + ATP = 4-CDP-2-C-methyl-D-erythritol 2-phosphate + ADP + H(+). The protein operates within isoprenoid biosynthesis; isopentenyl diphosphate biosynthesis via DXP pathway; isopentenyl diphosphate from 1-deoxy-D-xylulose 5-phosphate: step 3/6. Catalyzes the phosphorylation of the position 2 hydroxy group of 4-diphosphocytidyl-2C-methyl-D-erythritol. In Pectobacterium atrosepticum (strain SCRI 1043 / ATCC BAA-672) (Erwinia carotovora subsp. atroseptica), this protein is 4-diphosphocytidyl-2-C-methyl-D-erythritol kinase.